A 119-amino-acid chain; its full sequence is Holo-[acyl-carrier-protein] synthase (119 aa).

Residues Asp8 and Glu60 each contribute to the Mg(2+) site.

Belongs to the P-Pant transferase superfamily. AcpS family. Mg(2+) is required as a cofactor.

The protein localises to the cytoplasm. The enzyme catalyses apo-[ACP] + CoA = holo-[ACP] + adenosine 3',5'-bisphosphate + H(+). Its function is as follows. Transfers the 4'-phosphopantetheine moiety from coenzyme A to a Ser of acyl-carrier-protein. This chain is Holo-[acyl-carrier-protein] synthase, found in Staphylococcus haemolyticus (strain JCSC1435).